The following is a 446-amino-acid chain: Argininosuccinate synthase (446 aa).

ATP contacts are provided by residues 17-25 (AFSGGLDTS) and alanine 43. Tyrosine 99 contacts L-citrulline. The ATP site is built by glycine 129 and threonine 131. Residues threonine 131, asparagine 135, and aspartate 136 each contribute to the L-aspartate site. Asparagine 135 is an L-citrulline binding site. Aspartate 136 contributes to the ATP binding site. Positions 139 and 192 each coordinate L-citrulline. Position 194 (aspartate 194) interacts with ATP. Residues threonine 201, glutamate 203, and glutamate 280 each coordinate L-citrulline.

It belongs to the argininosuccinate synthase family. Type 2 subfamily. As to quaternary structure, homotetramer.

It localises to the cytoplasm. It carries out the reaction L-citrulline + L-aspartate + ATP = 2-(N(omega)-L-arginino)succinate + AMP + diphosphate + H(+). The protein operates within amino-acid biosynthesis; L-arginine biosynthesis; L-arginine from L-ornithine and carbamoyl phosphate: step 2/3. This is Argininosuccinate synthase from Methylibium petroleiphilum (strain ATCC BAA-1232 / LMG 22953 / PM1).